The following is a 129-amino-acid chain: Follitropin subunit beta (129 aa).

The signal sequence occupies residues 1 to 20 (MKTLQFFFLFCCWKAICCNS). Cystine bridges form between C21/C69, C35/C84, C38/C122, C46/C100, C50/C102, and C105/C112. Residues N25 and N42 are each glycosylated (N-linked (GlcNAc...) asparagine).

Belongs to the glycoprotein hormones subunit beta family. As to quaternary structure, heterodimer. The active follitropin is a heterodimer composed of an alpha chain/CGA shared with other hormones and a unique beta chain/FSHB shown here.

The protein localises to the secreted. In terms of biological role, together with the alpha chain CGA constitutes follitropin, the follicle-stimulating hormone, and provides its biological specificity to the hormone heterodimer. Binds FSHR, a G protein-coupled receptor, on target cells to activate downstream signaling pathways. Follitropin is involved in follicle development and spermatogenesis in reproductive organs. The protein is Follitropin subunit beta (FSHB) of Pan troglodytes (Chimpanzee).